The sequence spans 289 residues: Shikimate dehydrogenase (NADP(+)) (289 aa).

Shikimate-binding positions include 22–24 (SRS) and Thr-69. Lys-73 functions as the Proton acceptor in the catalytic mechanism. Glu-85 contributes to the NADP(+) binding site. Shikimate is bound by residues Asn-94 and Asp-109. Residues 134 to 138 (GAGGA), 158 to 163 (NRTLSR), and Ile-226 contribute to the NADP(+) site. Shikimate is bound at residue Tyr-228. Gly-249 contacts NADP(+).

Belongs to the shikimate dehydrogenase family. In terms of assembly, homodimer.

It catalyses the reaction shikimate + NADP(+) = 3-dehydroshikimate + NADPH + H(+). It functions in the pathway metabolic intermediate biosynthesis; chorismate biosynthesis; chorismate from D-erythrose 4-phosphate and phosphoenolpyruvate: step 4/7. Its function is as follows. Involved in the biosynthesis of the chorismate, which leads to the biosynthesis of aromatic amino acids. Catalyzes the reversible NADPH linked reduction of 3-dehydroshikimate (DHSA) to yield shikimate (SA). The protein is Shikimate dehydrogenase (NADP(+)) of Brucella canis (strain ATCC 23365 / NCTC 10854 / RM-666).